Here is a 344-residue protein sequence, read N- to C-terminus: Transcription factor AIG1 (344 aa).

The region spanning 131–180 is the bHLH domain; that stretch reads AASKSHSEAERRRRERINTHLAKLRSILPNTTKTDKASLLAEVIQHMKEL. The segment at 313-344 is disordered; sequence NDESNDNNNLEKSSSGGIKRQRTSKMVNRCYN. The span at 318–327 shows a compositional bias: low complexity; it reads DNNNLEKSSS.

As to quaternary structure, homodimer. Interacts with LHW.

Its subcellular location is the nucleus. Its function is as follows. Transcription factor required for MONOPTEROS-dependent root initiation in embryo. Transcriptionally controlled by MONOPTEROS. This chain is Transcription factor AIG1 (BHLH32), found in Arabidopsis thaliana (Mouse-ear cress).